A 219-amino-acid polypeptide reads, in one-letter code: N-(5'-phosphoribosyl)anthranilate isomerase (219 aa).

The protein belongs to the TrpF family.

The enzyme catalyses N-(5-phospho-beta-D-ribosyl)anthranilate = 1-(2-carboxyphenylamino)-1-deoxy-D-ribulose 5-phosphate. Its pathway is amino-acid biosynthesis; L-tryptophan biosynthesis; L-tryptophan from chorismate: step 3/5. The sequence is that of N-(5'-phosphoribosyl)anthranilate isomerase from Bordetella avium (strain 197N).